We begin with the raw amino-acid sequence, 427 residues long: Enolase (427 aa).

Gln163 provides a ligand contact to (2R)-2-phosphoglycerate. Residue Glu205 is the Proton donor of the active site. Mg(2+) is bound by residues Asp242, Glu285, and Asp312. (2R)-2-phosphoglycerate is bound by residues Lys337, Arg366, Ser367, and Lys388. Lys337 (proton acceptor) is an active-site residue.

This sequence belongs to the enolase family. It depends on Mg(2+) as a cofactor.

It localises to the cytoplasm. The protein resides in the secreted. The protein localises to the cell surface. The enzyme catalyses (2R)-2-phosphoglycerate = phosphoenolpyruvate + H2O. The protein operates within carbohydrate degradation; glycolysis; pyruvate from D-glyceraldehyde 3-phosphate: step 4/5. Functionally, catalyzes the reversible conversion of 2-phosphoglycerate (2-PG) into phosphoenolpyruvate (PEP). It is essential for the degradation of carbohydrates via glycolysis. In Rhodopseudomonas palustris (strain ATCC BAA-98 / CGA009), this protein is Enolase.